The chain runs to 427 residues: Trigger factor (427 aa).

A PPIase FKBP-type domain is found at 163-248 (GDVVNLDFDG…INEVKSKEVP (86 aa)).

It belongs to the FKBP-type PPIase family. Tig subfamily.

It localises to the cytoplasm. It catalyses the reaction [protein]-peptidylproline (omega=180) = [protein]-peptidylproline (omega=0). Involved in protein export. Acts as a chaperone by maintaining the newly synthesized protein in an open conformation. Functions as a peptidyl-prolyl cis-trans isomerase. In Macrococcus caseolyticus (strain JCSC5402) (Macrococcoides caseolyticum), this protein is Trigger factor.